Consider the following 1282-residue polypeptide: Protein crumbs homolog 2 (1282 aa).

Positions 1–35 (MALVGPRIWGPRRDIYPLLLLLLLLLLLLLPWVPA) are cleaved as a signal peptide. At 36–1221 (GLVPPETPSV…PLPLPFPLLE (1186 aa)) the chain is on the extracellular side. The 40-residue stretch at 71–110 (ELGGCATQPCHHGALCVPQGPDPNSFRCYCVPGFQGPHCE) folds into the EGF-like 1 domain. 27 disulfide bridges follow: Cys75–Cys86, Cys80–Cys98, Cys100–Cys109, Cys116–Cys127, Cys121–Cys136, Cys138–Cys147, Cys154–Cys165, Cys159–Cys174, Cys176–Cys185, Cys192–Cys203, Cys197–Cys212, Cys214–Cys224, Cys231–Cys242, Cys236–Cys251, Cys253–Cys262, Cys269–Cys280, Cys274–Cys310, Cys312–Cys321, Cys328–Cys339, Cys333–Cys348, Cys350–Cys359, Cys366–Cys377, Cys371–Cys386, Cys388–Cys397, Cys404–Cys415, Cys409–Cys428, and Cys430–Cys439. In terms of domain architecture, EGF-like 2; calcium-binding spans 112-148 (DIDECASRPCQHGGTCQNLADHYECHCPLGYAGVTCE). The EGF-like 3; calcium-binding domain occupies 150–186 (EVDECSSAPCLHGGSCLDGVGSYRCVCAPGYAGANCQ). Residues 188 to 225 (DVDECQSQPCAHGGVCHDLVNGFRCDCADTGYEGARCE) form the EGF-like 4; calcium-binding domain. EGF-like domains follow at residues 227-263 (EVLECASAPCAHNASCLDGFRSFRCLCWPGFSGERCE) and 265-322 (DEDE…NDCS). A glycan (N-linked (GlcNAc...) asparagine) is linked at Asn239. The O-linked (Glc...) serine glycan is linked to Ser271. The EGF-like 7; calcium-binding domain occupies 324 to 360 (DVDECASGPCLNGGSCQDLPNGFQCYCQDGYTGLTCQ). The 37-residue stretch at 362-398 (DMDECQSEPCLHGGTCSDTVAGYICQCPEAWGGHDCS) folds into the EGF-like 8; calcium-binding domain. The EGF-like 9 domain occupies 400–440 (QLTGCQGHTCPLAATCIPTFKSGLHGYFCRCPPGTYGPFCG). A glycan (N-linked (GlcNAc...) asparagine) is linked at Asn442. The Laminin G-like 1 domain maps to 444–607 (TFSVVSGSSV…ELKGTVLLGC (164 aa)). 4 disulfide bridges follow: Cys583/Cys607, Cys613/Cys624, Cys618/Cys633, and Cys635/Cys644. The region spanning 609–645 (RREPCQPLPCAHGGACVDLWTHFRCDCPRPYRGATCT) is the EGF-like 10 domain. Residues 649–808 (PAATFGLGGA…GQSSNLTQGC (160 aa)) form the Laminin G-like 2 domain. Asn672, Asn693, Asn789, and Asn803 each carry an N-linked (GlcNAc...) asparagine glycan. 4 disulfides stabilise this stretch: Cys769-Cys808, Cys814-Cys825, Cys819-Cys834, and Cys836-Cys845. The region spanning 810–846 (SEDTCNPNPCFNGGTCHVTWNDFYCTCSENFTGPTCA) is the EGF-like 11 domain. Residues Asn839, Asn889, Asn929, and Asn1006 are each glycosylated (N-linked (GlcNAc...) asparagine). The 180-residue stretch at 872 to 1051 (VAEATFREGP…PGSPAVSLGC (180 aa)) folds into the Laminin G-like 3 domain. Disulfide bonds link Cys1010-Cys1051, Cys1057-Cys1068, Cys1062-Cys1077, Cys1079-Cys1088, Cys1095-Cys1105, Cys1100-Cys1115, Cys1117-Cys1126, Cys1135-Cys1147, Cys1141-Cys1156, Cys1158-Cys1167, Cys1174-Cys1185, Cys1179-Cys1194, and Cys1196-Cys1205. 4 consecutive EGF-like domains span residues 1053–1089 (GGPVCSPSPCLHGGACRDLFDAFACSCGPAWEGPRCE), 1091–1127 (RADPCRSTPCVRGQCHARPDGRFECRCPPGFSGPRCR), 1131–1168 (LPQGCNLNSTCKDGAPCEGGPLGTNCSCQEGLAGLRCQ), and 1170–1206 (LDKPCEASPCLNGGTCRVASGIFECTCSAGFSGQFCE). N-linked (GlcNAc...) asparagine glycosylation is found at Asn1138 and Asn1155. The chain crosses the membrane as a helical span at residues 1222–1242 (VAVPAACACLLLLLLGLLSGI). The Cytoplasmic portion of the chain corresponds to 1243–1282 (LAARKRRQSEGTYSPSQQEVAGARLEMDSVLKVPPEERLI). The segment at 1246–1282 (RKRRQSEGTYSPSQQEVAGARLEMDSVLKVPPEERLI) is interaction with EPB41L5.

The protein belongs to the Crumbs protein family. As to quaternary structure, interacts (via intracellular domain) with EPB41L5. O-glucosylated by POGLUT1 at Ser-271; consists of an O-glucose trisaccharide, in which the O-glucose is elongated by the addition of two xylose residues. O-glucosylation is required for localization at the plasma membrane. As to expression, in the adult eye, strongly expressed in the outer nuclear layer, containing the cell bodies of the photoreceptor cells, and in the inner nuclear layer, containing the cell bodies of the horizontal, bipolar, amacrine, and Mueller glial cells. Also expressed in some cells in the ganglion cell layer (or may be displaced amacrine cells rather than ganglion cells).

The protein resides in the apical cell membrane. Functionally, apical polarity protein that plays a central role during the epithelial-to-mesenchymal transition (EMT) at gastrulation, when newly specified mesodermal cells move inside the embryo. Acts by promoting cell ingression, the process by which cells leave the epithelial epiblast and move inside the embryo to form a new tissue layer. The anisotropic distribution of CRB2 and MYH10/myosin-IIB at cell edges define which cells will ingress: cells with high apical CRB2 are probably extruded from the epiblast by neighboring cells with high levels of apical MYH10/myosin-IIB. Also required for maintenance of the apical polarity complex during development of the cortex. The protein is Protein crumbs homolog 2 of Mus musculus (Mouse).